A 139-amino-acid chain; its full sequence is Ribonuclease P protein component (139 aa).

The disordered stretch occupies residues 120 to 139 (KATTGGECTPKSEKCVTAPR).

The protein belongs to the RnpA family. In terms of assembly, consists of a catalytic RNA component (M1 or rnpB) and a protein subunit.

The enzyme catalyses Endonucleolytic cleavage of RNA, removing 5'-extranucleotides from tRNA precursor.. In terms of biological role, RNaseP catalyzes the removal of the 5'-leader sequence from pre-tRNA to produce the mature 5'-terminus. It can also cleave other RNA substrates such as 4.5S RNA. The protein component plays an auxiliary but essential role in vivo by binding to the 5'-leader sequence and broadening the substrate specificity of the ribozyme. This Chlamydia pneumoniae (Chlamydophila pneumoniae) protein is Ribonuclease P protein component.